The following is a 188-amino-acid chain: UPF0301 protein XCV3063 (188 aa).

This sequence belongs to the UPF0301 (AlgH) family.

The sequence is that of UPF0301 protein XCV3063 from Xanthomonas euvesicatoria pv. vesicatoria (strain 85-10) (Xanthomonas campestris pv. vesicatoria).